Here is a 547-residue protein sequence, read N- to C-terminus: Chaperonin GroEL 1 (547 aa).

ATP contacts are provided by residues 30-33, lysine 51, 87-91, glycine 415, and aspartate 496; these read TLGP and DGTTT.

Belongs to the chaperonin (HSP60) family. In terms of assembly, forms a cylinder of 14 subunits composed of two heptameric rings stacked back-to-back. Interacts with the co-chaperonin GroES.

Its subcellular location is the cytoplasm. The catalysed reaction is ATP + H2O + a folded polypeptide = ADP + phosphate + an unfolded polypeptide.. Its function is as follows. Together with its co-chaperonin GroES, plays an essential role in assisting protein folding. The GroEL-GroES system forms a nano-cage that allows encapsulation of the non-native substrate proteins and provides a physical environment optimized to promote and accelerate protein folding. The protein is Chaperonin GroEL 1 of Rhodopseudomonas palustris (strain BisB5).